Here is a 554-residue protein sequence, read N- to C-terminus: MTSTAPPKVQYEAVIGLEVHVQLSTETKLFCRCSTRFGNTPNTNICPICTGQPGTLPVLNQQALDYAVLTASALNCQIHPQGLSKFDRKQYFYPDLPKNYQISQYDLPLAERGWLEIEVEGEPAKRIGITRLHMEEDAGKLVHAGADRLSGSTHSLVDFNRAGVALCEIVSEPDIRTAAEAAAYAGELRRIVRYLGVCDGNMQEGSLRFDLNISVRPAGEGKFGTKVEIKNLNSFNSLQRAVEYEFARQVDCLLSGERIVQETRLWDEATQRTISMRSKEEANDYRYFPEPDLVPIALNGTQIDAYRQRLGELPAQKRHRYRETLGLSSYDAGVLTDEREVAEYFEQVVALGIPAKQAANFVSGAVAAHLNETRRSISQIKVTPEVSAELLALINQGIISNRIANELLPDLFEKGGSPRALVEERGLTQISDRGQLEQIVDEVLAGESDSVAAYRGGRTKLLGFFVGKVMKKTAGRADPQVVNDLLQSKLAEQPTAPPPEPESAAETPEAPPAVEDAPPEAPTEAITAEAGSAEAITAASEEPDTPVSHQDAHA.

The interval 491 to 554 (AEQPTAPPPE…TPVSHQDAHA (64 aa)) is disordered. Low complexity predominate over residues 502–540 (ESAAETPEAPPAVEDAPPEAPTEAITAEAGSAEAITAAS).

This sequence belongs to the GatB/GatE family. GatB subfamily. As to quaternary structure, heterotrimer of A, B and C subunits.

The enzyme catalyses L-glutamyl-tRNA(Gln) + L-glutamine + ATP + H2O = L-glutaminyl-tRNA(Gln) + L-glutamate + ADP + phosphate + H(+). It carries out the reaction L-aspartyl-tRNA(Asn) + L-glutamine + ATP + H2O = L-asparaginyl-tRNA(Asn) + L-glutamate + ADP + phosphate + 2 H(+). In terms of biological role, allows the formation of correctly charged Asn-tRNA(Asn) or Gln-tRNA(Gln) through the transamidation of misacylated Asp-tRNA(Asn) or Glu-tRNA(Gln) in organisms which lack either or both of asparaginyl-tRNA or glutaminyl-tRNA synthetases. The reaction takes place in the presence of glutamine and ATP through an activated phospho-Asp-tRNA(Asn) or phospho-Glu-tRNA(Gln). The polypeptide is Aspartyl/glutamyl-tRNA(Asn/Gln) amidotransferase subunit B (Gloeobacter violaceus (strain ATCC 29082 / PCC 7421)).